An 867-amino-acid chain; its full sequence is V-set and immunoglobulin domain-containing protein 10-like (867 aa).

The N-terminal stretch at 1–27 (MDNPQALPLFLLLASLVGILTLRASSG) is a signal peptide. Over 28–776 (LQQTNFSSAF…RAGPTLSHGA (749 aa)) the chain is Extracellular. N32 is a glycosylation site (N-linked (GlcNAc...) asparagine). Low complexity predominate over residues 35–45 (SAFSSDSKSSS). The disordered stretch occupies residues 35–60 (SAFSSDSKSSSQGLGVEVPSIKPPSW). N-linked (GlcNAc...) asparagine glycans are attached at residues N88, N96, and N144. The disordered stretch occupies residues 104-186 (LSPVSPFSET…PESKFSAETH (83 aa)). A compositionally biased stretch (polar residues) spans 137-153 (TVKTPASNISTQVSHTK). Basic and acidic residues predominate over residues 159-170 (PDSKFSPDDMDL). The segment covering 173–186 (SAQSPESKFSAETH) has biased composition (polar residues). Ig-like C2-type domains lie at 302–394 (PQLS…ADVS) and 402–487 (PTIT…SLLN). A disulfide bridge links C324 with C378. The N-linked (GlcNAc...) asparagine glycan is linked to N423. C428 and C471 are disulfide-bonded. An N-linked (GlcNAc...) asparagine glycan is attached at N487. Residues 602–627 (ASGCPPPSRASWAREGRPLAPGGGSR) are disordered. N-linked (GlcNAc...) asparagine glycans are attached at residues N641 and N650. The helical transmembrane segment at 777-797 (IAGIVLGSLLGLALLAVLLLL) threads the bilayer. Topologically, residues 798–867 (CICCLCRFRG…QAQTPVQLSL (70 aa)) are cytoplasmic.

As to expression, expressed in the esophagus, particularly in the suprabasilar layers of the epithelium. Expression is largely reduced in esophageal metaplasia, dysplasia, and adenocarcinoma lesions.

Its subcellular location is the membrane. The chain is V-set and immunoglobulin domain-containing protein 10-like (VSIG10L) from Homo sapiens (Human).